Here is a 913-residue protein sequence, read N- to C-terminus: Anoctamin-5 (913 aa).

The Cytoplasmic segment spans residues 1 to 299 (MGDPDLLEVL…DLIKNYYGEK (299 aa)). A helical membrane pass occupies residues 300-320 (IGIYFVFLGFYTEMLFFAAVV). Over 321–380 (GLACFIYGLLSMEHNTSSTEICDPEIGGQMIMCPLCDQVCDYWRLNSTCLASKFSHLFDN) the chain is Extracellular. N-linked (GlcNAc...) asparagine glycans are attached at residues Asn-335, Asn-366, and Asn-380. The helical transmembrane segment at 381–401 (ESTVFFAIFMGIWVTLFLEFW) threads the bilayer. Residues 402-462 (KQRQARLEYE…YTRIPWYFLS (61 aa)) lie on the Cytoplasmic side of the membrane. Residues 463-483 (GATVTLWMSLVVTSMVAVIVY) form a helical membrane-spanning segment. The Extracellular portion of the chain corresponds to 484 to 511 (RLSVFATFASFMESDASLKQVKSFLTPQ). A helical membrane pass occupies residues 512–532 (ITTSLTGSCLNFIVILILNFF). Over 533–557 (YEKISAWITKMEIPRTYQEYESSLT) the chain is Cytoplasmic. A helical transmembrane segment spans residues 558 to 578 (LKMFLFQFVNFYSSCFYVAFF). The Extracellular segment spans residues 579 to 679 (KGKFVGYPGK…FYEYLETVTQ (101 aa)). The chain crosses the membrane as a helical span at residues 680–700 (FGFVTLFVASFPLAPLLALIN). At 701-732 (NIVEIRVDAWKLTTQYRRTVASKAHSIGVWQD) the chain is on the cytoplasmic side. Residues 733-753 (ILYGMAVLSVATNAFIVAFTS) traverse the membrane as a helical segment. At 754–834 (DIIPRLVYYY…FWHVLAAKMT (81 aa)) the chain is on the extracellular side. N-linked (GlcNAc...) asparagine glycans are attached at residues Asn-768, Asn-778, and Asn-791. Residues 835 to 855 (FIIVMEHVVFLVKFLLAWMIP) traverse the membrane as a helical segment. The Cytoplasmic portion of the chain corresponds to 856–913 (DVPKDVVERIKREKLMTIKILHDFELNKLKENLGINSNEFAKHVMIEENKAQLAKSTL).

Belongs to the anoctamin family. As to expression, highly expressed in brain, heart, kidney, lung, and skeletal muscle. Weakly expressed in bone marrow, fetal liver, placenta, spleen, thymus, osteoblasts and periodontal ligament cells.

It is found in the endoplasmic reticulum membrane. The protein resides in the cell membrane. Functionally, plays a role in plasma membrane repair in a process involving annexins. Does not exhibit calcium-activated chloride channel (CaCC) activity. The polypeptide is Anoctamin-5 (ANO5) (Homo sapiens (Human)).